A 194-amino-acid chain; its full sequence is GTP cyclohydrolase 1 (194 aa).

Zn(2+) contacts are provided by cysteine 85, histidine 88, and cysteine 156.

It belongs to the GTP cyclohydrolase I family. Toroid-shaped homodecamer, composed of two pentamers of five dimers.

It carries out the reaction GTP + H2O = 7,8-dihydroneopterin 3'-triphosphate + formate + H(+). It functions in the pathway cofactor biosynthesis; 7,8-dihydroneopterin triphosphate biosynthesis; 7,8-dihydroneopterin triphosphate from GTP: step 1/1. This chain is GTP cyclohydrolase 1, found in Bacteroides fragilis (strain YCH46).